A 309-amino-acid polypeptide reads, in one-letter code: Malate dehydrogenase (309 aa).

NAD(+) is bound by residues 9–14 and aspartate 33; that span reads GAGFVG. Substrate-binding residues include arginine 82 and arginine 88. NAD(+) contacts are provided by residues asparagine 95 and 118–120; that span reads VNN. Asparagine 120 and arginine 151 together coordinate substrate. Residue histidine 175 is the Proton acceptor of the active site.

This sequence belongs to the LDH/MDH superfamily. MDH type 3 family.

It carries out the reaction (S)-malate + NAD(+) = oxaloacetate + NADH + H(+). Catalyzes the reversible oxidation of malate to oxaloacetate. This is Malate dehydrogenase from Chloroflexus aggregans (strain MD-66 / DSM 9485).